Reading from the N-terminus, the 340-residue chain is Guanine nucleotide-binding protein G(I)/G(S)/G(T) subunit beta-3 (340 aa).

7 WD repeats span residues 53–83 (GHLA…IVWD), 95–125 (LRSS…SIYN), 141–170 (AHTG…ALWD), 182–212 (GHTG…KLWD), 224–254 (GHES…RLFD), 268–298 (SIIC…NVWD), and 310–340 (GHDN…KIWN).

It belongs to the WD repeat G protein beta family. In terms of assembly, g proteins are composed of 3 units, alpha, beta and gamma. Interacts with RASD2.

In terms of biological role, guanine nucleotide-binding proteins (G proteins) are involved as a modulator or transducer in various transmembrane signaling systems. The beta and gamma chains are required for the GTPase activity, for replacement of GDP by GTP, and for G protein-effector interaction. This Homo sapiens (Human) protein is Guanine nucleotide-binding protein G(I)/G(S)/G(T) subunit beta-3 (GNB3).